The chain runs to 117 residues: MQKIVIVANGAPYGSESLFNSLRLAIALREQESNLDLRLFLMSDAVTAGLRGQKPGEGYNIQQMLEILTAQNVPVKLCKTCTDGRGISTLPLIDGVEIGTLVELAQWTLSADKVLTF.

To M.jannaschii MJ0989. Homohexamer. The hexamer is formed by a dimer of trimers.

The sequence is that of Protein YchN (ychN) from Escherichia coli O157:H7.